We begin with the raw amino-acid sequence, 116 residues long: Small ribosomal subunit protein bS16 (116 aa).

It belongs to the bacterial ribosomal protein bS16 family.

This is Small ribosomal subunit protein bS16 from Chlamydia trachomatis serovar A (strain ATCC VR-571B / DSM 19440 / HAR-13).